The primary structure comprises 59 residues: Ribosome biogenesis protein Nop10 (59 aa).

Belongs to the NOP10 family.

Functionally, involved in ribosome biogenesis; more specifically in 18S rRNA pseudouridylation and in cleavage of pre-rRNA. The chain is Ribosome biogenesis protein Nop10 from Thermococcus gammatolerans (strain DSM 15229 / JCM 11827 / EJ3).